The chain runs to 321 residues: Glucokinase (321 aa).

ATP is bound at residue 8-13; sequence GDVGGT.

It belongs to the bacterial glucokinase family.

It is found in the cytoplasm. It catalyses the reaction D-glucose + ATP = D-glucose 6-phosphate + ADP + H(+). This Tolumonas auensis (strain DSM 9187 / NBRC 110442 / TA 4) protein is Glucokinase.